The chain runs to 160 residues: MSKHPMTVEGAEALKAELHRLKFVDRPRIVEAIATARAHGDLKENAEYHAAREQQSFNEGRIQELEAKLSHAQIIDISKLPNNGKVIFGSTVTICHVATGSELTYKIVGEDEADIKLNKISYSSPIARALIGKELDDAVTVETPGGMVEYEIIQVQYIVE.

The stretch at 50-70 forms a coiled coil; the sequence is AAREQQSFNEGRIQELEAKLS.

Belongs to the GreA/GreB family.

In terms of biological role, necessary for efficient RNA polymerase transcription elongation past template-encoded arresting sites. The arresting sites in DNA have the property of trapping a certain fraction of elongating RNA polymerases that pass through, resulting in locked ternary complexes. Cleavage of the nascent transcript by cleavage factors such as GreA or GreB allows the resumption of elongation from the new 3'terminus. GreA releases sequences of 2 to 3 nucleotides. The sequence is that of Transcription elongation factor GreA from Legionella pneumophila (strain Paris).